Consider the following 1191-residue polypeptide: WASH complex subunit homolog 5 (1191 aa).

It belongs to the strumpellin family. Component of the WASH complex.

Its subcellular location is the early endosome. Its function is as follows. Acts at least in part as component of the WASH complex which may regulate wash nucleation-promoting factor (NPF) activity and is required for its membrane targeting during endosomal sorting. During embryogenesis, not involved in the wash-dependent developmental migration of hemocytes anteriorly from the tail. This chain is WASH complex subunit homolog 5, found in Drosophila melanogaster (Fruit fly).